The sequence spans 61 residues: UPF0391 membrane protein Ajs_0703 (61 aa).

2 helical membrane passes run 5–25 (AIIF…GVAA) and 33–53 (VLFV…LLGI).

This sequence belongs to the UPF0391 family.

The protein localises to the cell membrane. This Acidovorax sp. (strain JS42) protein is UPF0391 membrane protein Ajs_0703.